Reading from the N-terminus, the 237-residue chain is Lectin alpha chain (237 aa).

Residues glutamate 8 and aspartate 10 each coordinate Mn(2+). The Ca(2+) site is built by aspartate 10, tyrosine 12, asparagine 14, and aspartate 19. Tyrosine 12 contacts a carbohydrate. The Mn(2+) site is built by aspartate 19, histidine 24, and serine 34. 99-100 (LY) lines the a carbohydrate pocket. Position 208 (aspartate 208) interacts with Ca(2+). Arginine 228 provides a ligand contact to a carbohydrate.

This sequence belongs to the leguminous lectin family. In terms of assembly, equilibrium between homodimer and homotetramer. Oligomerization is pH-dependent with homotetramers forming at pH 6.5 and above. The beta and gamma chains are produced by partial proteolytic processing of the lectin alpha chain by an asparaginyl endopeptidase. Mixture of 60% alpha lectin and 40% of its beta and gamma proteolytic fragments.

Functionally, D-mannose/D-glucose-binding lectin. Has anti-inflammatory activity in rats. Induces histamine release in mast cells from rat. Induces lymphocyte proliferation and IFNG production. This is Lectin alpha chain from Dioclea guianensis.